A 466-amino-acid polypeptide reads, in one-letter code: Soluble pyridine nucleotide transhydrogenase (466 aa).

Position 36-45 (36-45) interacts with FAD; the sequence is EKESSVGGGC.

The protein belongs to the class-I pyridine nucleotide-disulfide oxidoreductase family. FAD serves as cofactor.

Its subcellular location is the cytoplasm. It catalyses the reaction NAD(+) + NADPH = NADH + NADP(+). Conversion of NADPH, generated by peripheral catabolic pathways, to NADH, which can enter the respiratory chain for energy generation. The chain is Soluble pyridine nucleotide transhydrogenase from Vibrio parahaemolyticus serotype O3:K6 (strain RIMD 2210633).